Here is a 62-residue protein sequence, read N- to C-terminus: Amolopin-P1 (62 aa).

An N-terminal signal peptide occupies residues 1-22; it reads MFPMKKSLLLLFFFGPISLSFC. The propeptide occupies 23-44; that stretch reads DQERGADEEENGGEVTEQEVKR.

As to expression, expressed by the skin glands.

The protein localises to the secreted. Functionally, antimicrobial peptide with activity against Gram-positive bacteria. Has been tested against S.aureus (MIC=37.5 ug/mL), against B.pumilus (MIC=75.0 ug/mL), B.cereus (no activity detected). Does not show activity against Gram-negative bacteria (E.coli, B.dysenteriae, A.calcoaceticus, P.aeruginosa) and fungi (C.albicans). Does not show hemolytic activity against rabbit erythrocytes. This Amolops loloensis (Lolokou Sucker Frog) protein is Amolopin-P1.